An 85-amino-acid chain; its full sequence is NAD(P)H-quinone oxidoreductase subunit O (85 aa).

The protein belongs to the complex I NdhO subunit family. NDH-1 can be composed of about 15 different subunits; different subcomplexes with different compositions have been identified which probably have different functions.

It localises to the cellular thylakoid membrane. The enzyme catalyses a plastoquinone + NADH + (n+1) H(+)(in) = a plastoquinol + NAD(+) + n H(+)(out). The catalysed reaction is a plastoquinone + NADPH + (n+1) H(+)(in) = a plastoquinol + NADP(+) + n H(+)(out). Functionally, NDH-1 shuttles electrons from an unknown electron donor, via FMN and iron-sulfur (Fe-S) centers, to quinones in the respiratory and/or the photosynthetic chain. The immediate electron acceptor for the enzyme in this species is believed to be plastoquinone. Couples the redox reaction to proton translocation, and thus conserves the redox energy in a proton gradient. Cyanobacterial NDH-1 also plays a role in inorganic carbon-concentration. The sequence is that of NAD(P)H-quinone oxidoreductase subunit O from Synechococcus sp. (strain WH7803).